A 340-amino-acid polypeptide reads, in one-letter code: GTPase Obg (340 aa).

Residues 1–159 (MDFIDEVKLY…KYVVLKLKVL (159 aa)) form the Obg domain. An OBG-type G domain is found at 160–329 (SDVGIIGMPN…LNEKLKKGSS (170 aa)). GTP-binding positions include 166 to 173 (GMPNAGKS), 191 to 195 (FTTIK), 212 to 215 (DIPG), 279 to 282 (NKCD), and 310 to 312 (GED). Residues Ser-173 and Thr-193 each coordinate Mg(2+).

Belongs to the TRAFAC class OBG-HflX-like GTPase superfamily. OBG GTPase family. In terms of assembly, monomer. Mg(2+) is required as a cofactor.

The protein resides in the cytoplasm. An essential GTPase which binds GTP, GDP and possibly (p)ppGpp with moderate affinity, with high nucleotide exchange rates and a fairly low GTP hydrolysis rate. Plays a role in control of the cell cycle, stress response, ribosome biogenesis and in those bacteria that undergo differentiation, in morphogenesis control. In Wolbachia sp. subsp. Brugia malayi (strain TRS), this protein is GTPase Obg.